A 171-amino-acid chain; its full sequence is T-cell surface glycoprotein CD3 delta chain (171 aa).

The N-terminal stretch at 1–21 (MEHSTFLSGLVLATLLSQVSP) is a signal peptide. Topologically, residues 22–105 (FKIPIEELED…CVELDPATVA (84 aa)) are extracellular. Cys37 and Cys73 form a disulfide bridge. Residues Asn38 and Asn74 are each glycosylated (N-linked (GlcNAc...) asparagine). A helical transmembrane segment spans residues 106-126 (GIIVTDVIATLLLALGVFCFA). Over 127–171 (GHETGRLSGAADTQALLRNDQVYQPLRDRDDAQYSHLGGNWARNK) the chain is Cytoplasmic. Residues 138–166 (DTQALLRNDQVYQPLRDRDDAQYSHLGGN) form the ITAM domain. A phosphotyrosine mark is found at Tyr149 and Tyr160.

The TCR-CD3 complex is composed of a CD3D/CD3E and a CD3G/CD3E heterodimers that preferentially associate with TCRalpha and TCRbeta, respectively, to form TCRalpha/CD3E/CD3G and TCRbeta/CD3G/CD3E trimers. In turn, the hexamer interacts with CD3Z homodimer to form the TCR-CD3 complex. Alternatively, TCRalpha and TCRbeta can be replaced by TCRgamma and TCRdelta. Interacts with coreceptors CD4 and CD8. Phosphorylated on Tyr residues after T-cell receptor triggering by LCK in association with CD4/CD8. In terms of tissue distribution, CD3D is mostly present on T-lymphocytes with its TCR-CD3 partners. Present also in fetal NK-cells.

Its subcellular location is the cell membrane. Its function is as follows. Part of the TCR-CD3 complex present on T-lymphocyte cell surface that plays an essential role in adaptive immune response. When antigen presenting cells (APCs) activate T-cell receptor (TCR), TCR-mediated signals are transmitted across the cell membrane by the CD3 chains CD3D, CD3E, CD3G and CD3Z. All CD3 chains contain immunoreceptor tyrosine-based activation motifs (ITAMs) in their cytoplasmic domain. Upon TCR engagement, these motifs become phosphorylated by Src family protein tyrosine kinases LCK and FYN, resulting in the activation of downstream signaling pathways. In addition of this role of signal transduction in T-cell activation, CD3D plays an essential role in thymocyte differentiation. Indeed, participates in correct intracellular TCR-CD3 complex assembly and surface expression. In absence of a functional TCR-CD3 complex, thymocytes are unable to differentiate properly. Interacts with CD4 and CD8 and thus serves to establish a functional link between the TCR and coreceptors CD4 and CD8, which is needed for activation and positive selection of CD4 or CD8 T-cells. This is T-cell surface glycoprotein CD3 delta chain (CD3D) from Homo sapiens (Human).